The chain runs to 33 residues: MPRRRRSSSRPVRRRRRPRVSRRRRRRGRRRRR.

Residues 1–33 (MPRRRRSSSRPVRRRRRPRVSRRRRRRGRRRRR) form a disordered region.

In terms of tissue distribution, testis.

The protein resides in the nucleus. It is found in the chromosome. Functionally, protamines substitute for histones in the chromatin of sperm during the haploid phase of spermatogenesis. They compact sperm DNA into a highly condensed, stable and inactive complex. The chain is Protamine TP17 from Oncorhynchus mykiss (Rainbow trout).